The sequence spans 194 residues: 7-methyl-GTP pyrophosphatase (194 aa).

D70 (proton acceptor) is an active-site residue.

This sequence belongs to the Maf family. YceF subfamily. A divalent metal cation is required as a cofactor.

It localises to the cytoplasm. The enzyme catalyses N(7)-methyl-GTP + H2O = N(7)-methyl-GMP + diphosphate + H(+). Nucleoside triphosphate pyrophosphatase that hydrolyzes 7-methyl-GTP (m(7)GTP). May have a dual role in cell division arrest and in preventing the incorporation of modified nucleotides into cellular nucleic acids. This is 7-methyl-GTP pyrophosphatase from Vibrio vulnificus (strain YJ016).